The primary structure comprises 453 residues: F-box/FBD/LRR-repeat protein At4g00160 (453 aa).

Residues 15-68 (KDRISELPDALLIKILSFLPTKIVVATSVFSKQWRPLWKLVPNLEFDSEDYDDK) form the F-box domain. 6 LRR repeats span residues 89 to 111 (LESFRLEFESEKVDPVDIGLWVG), 165 to 190 (MKSLRTLHLELVSYKDESSIRNLLSG), 215 to 239 (VPSLKRLTINDDHDGQEFWGYVINA), 247 to 270 (IEDLRCPGFCLNAPELMEANIFDG), 282 to 307 (LTSVKRLLLNLSPWKITYPTGSIFYQ), and 331 to 358 (SPKLQVLKLTDNCVKFHKNGLPGGKWNE). Residues 355-406 (KWNEPKYVPECLLSHLETFVWRRFDWGREEEKEIATYILKNARRLNKATFST) enclose the FBD domain.

The protein is F-box/FBD/LRR-repeat protein At4g00160 of Arabidopsis thaliana (Mouse-ear cress).